Reading from the N-terminus, the 666-residue chain is DNA ligase (666 aa).

NAD(+) contacts are provided by residues 31–35 (DYDFD), 80–81 (SL), and glutamate 111. The N6-AMP-lysine intermediate role is filled by lysine 113. Positions 134, 170, 285, and 309 each coordinate NAD(+). Positions 403, 406, 421, and 427 each coordinate Zn(2+). The region spanning 587 to 666 (VVSNKLLGKI…ESDFSALLTS (80 aa)) is the BRCT domain.

The protein belongs to the NAD-dependent DNA ligase family. LigA subfamily. Mg(2+) serves as cofactor. Requires Mn(2+) as cofactor.

The enzyme catalyses NAD(+) + (deoxyribonucleotide)n-3'-hydroxyl + 5'-phospho-(deoxyribonucleotide)m = (deoxyribonucleotide)n+m + AMP + beta-nicotinamide D-nucleotide.. Functionally, DNA ligase that catalyzes the formation of phosphodiester linkages between 5'-phosphoryl and 3'-hydroxyl groups in double-stranded DNA using NAD as a coenzyme and as the energy source for the reaction. It is essential for DNA replication and repair of damaged DNA. This is DNA ligase from Flavobacterium psychrophilum (strain ATCC 49511 / DSM 21280 / CIP 103535 / JIP02/86).